We begin with the raw amino-acid sequence, 101 residues long: Protein Tat (101 aa).

A compositionally biased stretch (basic and acidic residues) spans 1 to 10; sequence MEPVDPRLEP. Residues 1 to 20 form a disordered region; that stretch reads MEPVDPRLEPWNHPGSQPKT. The interaction with human CREBBP stretch occupies residues 1 to 24; sequence MEPVDPRLEPWNHPGSQPKTACNN. Residues 1-48 are transactivation; that stretch reads MEPVDPRLEPWNHPGSQPKTACNNCYCKRCCYHCLYCFTKKGLGISYG. Positions 22, 25, and 27 each coordinate Zn(2+). A cysteine-rich region spans residues 22–37; that stretch reads CNNCYCKRCCYHCLYC. At K28 the chain carries N6-acetyllysine; by host PCAF. C30, H33, C34, and C37 together coordinate Zn(2+). The core stretch occupies residues 38 to 48; it reads FTKKGLGISYG. Residues 48-58 show a composition bias toward basic residues; that stretch reads GRKKRSQRRRT. The tract at residues 48 to 101 is disordered; it reads GRKKRSQRRRTPQSSKSHQDLIPEQPLSQQQGDQTGQKKQKEALESKTEADPCD. The short motif at 49–57 is the Nuclear localization signal, RNA-binding (TAR), and protein transduction element; the sequence is RKKRSQRRR. The interval 49–86 is interaction with the host capping enzyme RNGTT; sequence RKKRSQRRRTPQSSKSHQDLIPEQPLSQQQGDQTGQKK. Residues K50 and K51 each carry the N6-acetyllysine; by host EP300 and GCN5L2 modification. Asymmetric dimethylarginine; by host PRMT6 is present on R52. Positions 86 to 101 are enriched in basic and acidic residues; sequence KQKEALESKTEADPCD.

The protein belongs to the lentiviruses Tat family. As to quaternary structure, interacts with host CCNT1. Associates with the P-TEFb complex composed at least of Tat, P-TEFb (CDK9 and CCNT1), TAR RNA, RNA Pol II. Recruits the HATs CREBBP, TAF1/TFIID, EP300, PCAF and GCN5L2. Interacts with host KAT5/Tip60; this interaction targets the latter to degradation. Interacts with the host deacetylase SIRT1. Interacts with host capping enzyme RNGTT; this interaction stimulates RNGTT. Binds to host KDR, and to the host integrins ITGAV/ITGB3 and ITGA5/ITGB1. Interacts with host KPNB1/importin beta-1 without previous binding to KPNA1/importin alpha-1. Interacts with EIF2AK2. Interacts with host nucleosome assembly protein NAP1L1; this interaction may be required for the transport of Tat within the nucleus, since the two proteins interact at the nuclear rim. Interacts with host C1QBP/SF2P32; this interaction involves lysine-acetylated Tat. Interacts with the host chemokine receptors CCR2, CCR3 and CXCR4. Interacts with host DPP4/CD26; this interaction may trigger an anti-proliferative effect. Interacts with host LDLR. Interacts with the host extracellular matrix metalloproteinase MMP1. Interacts with host PRMT6; this interaction mediates Tat's methylation. Interacts with, and is ubiquitinated by MDM2/Hdm2. Interacts with host PSMC3 and HTATIP2. Interacts with STAB1; this interaction may overcome SATB1-mediated repression of IL2 and IL2RA (interleukin) in T cells by binding to the same domain than HDAC1. Interacts (when acetylated) with human CDK13, thereby increasing HIV-1 mRNA splicing and promoting the production of the doubly spliced HIV-1 protein Nef. Interacts with host TBP; this interaction modulates the activity of transcriptional pre-initiation complex. Interacts with host RELA. Interacts with host PLSCR1; this interaction negatively regulates Tat transactivation activity by altering its subcellular distribution. Post-translationally, asymmetrical arginine methylation by host PRMT6 seems to diminish the transactivation capacity of Tat and affects the interaction with host CCNT1. In terms of processing, acetylation by EP300, CREBBP, GCN5L2/GCN5 and PCAF regulates the transactivation activity of Tat. EP300-mediated acetylation of Lys-50 promotes dissociation of Tat from the TAR RNA through the competitive binding to PCAF's bromodomain. In addition, the non-acetylated Tat's N-terminus can also interact with PCAF. PCAF-mediated acetylation of Lys-28 enhances Tat's binding to CCNT1. Lys-50 is deacetylated by SIRT1. Polyubiquitination by host MDM2 does not target Tat to degradation, but activates its transactivation function and fosters interaction with CCNT1 and TAR RNA. Post-translationally, phosphorylated by EIF2AK2 on serine and threonine residues adjacent to the basic region important for TAR RNA binding and function. Phosphorylation of Tat by EIF2AK2 is dependent on the prior activation of EIF2AK2 by dsRNA.

It localises to the host nucleus. It is found in the host nucleolus. The protein localises to the host cytoplasm. The protein resides in the secreted. In terms of biological role, transcriptional activator that increases RNA Pol II processivity, thereby increasing the level of full-length viral transcripts. Recognizes a hairpin structure at the 5'-LTR of the nascent viral mRNAs referred to as the transactivation responsive RNA element (TAR) and recruits the cyclin T1-CDK9 complex (P-TEFb complex) that will in turn hyperphosphorylate the RNA polymerase II to allow efficient elongation. The CDK9 component of P-TEFb and other Tat-activated kinases hyperphosphorylate the C-terminus of RNA Pol II that becomes stabilized and much more processive. Other factors such as HTATSF1/Tat-SF1, SUPT5H/SPT5, and HTATIP2 are also important for Tat's function. Besides its effect on RNA Pol II processivity, Tat induces chromatin remodeling of proviral genes by recruiting the histone acetyltransferases (HATs) CREBBP, EP300 and PCAF to the chromatin. This also contributes to the increase in proviral transcription rate, especially when the provirus integrates in transcriptionally silent region of the host genome. To ensure maximal activation of the LTR, Tat mediates nuclear translocation of NF-kappa-B by interacting with host RELA. Through its interaction with host TBP, Tat may also modulate transcription initiation. Tat can reactivate a latently infected cell by penetrating in it and transactivating its LTR promoter. In the cytoplasm, Tat is thought to act as a translational activator of HIV-1 mRNAs. Its function is as follows. Extracellular circulating Tat can be endocytosed by surrounding uninfected cells via the binding to several surface receptors such as CD26, CXCR4, heparan sulfate proteoglycans (HSPG) or LDLR. Neurons are rarely infected, but they internalize Tat via their LDLR. Through its interaction with nuclear HATs, Tat is potentially able to control the acetylation-dependent cellular gene expression. Modulates the expression of many cellular genes involved in cell survival, proliferation or in coding for cytokines or cytokine receptors. Tat plays a role in T-cell and neurons apoptosis. Tat induced neurotoxicity and apoptosis probably contribute to neuroAIDS. Circulating Tat also acts as a chemokine-like and/or growth factor-like molecule that binds to specific receptors on the surface of the cells, affecting many cellular pathways. In the vascular system, Tat binds to ITGAV/ITGB3 and ITGA5/ITGB1 integrins dimers at the surface of endothelial cells and competes with bFGF for heparin-binding sites, leading to an excess of soluble bFGF. This Homo sapiens (Human) protein is Protein Tat.